Here is a 300-residue protein sequence, read N- to C-terminus: Putative zinc finger protein 705EP (300 aa).

Positions 7–78 constitute a KRAB domain; it reads VTFEDVAIDF…GREFLQDQNP (72 aa). The C2H2-type 1; degenerate zinc-finger motif lies at 172–194; that stretch reads YQCNLCEKAYTNCFHLRRPKMTH. C2H2-type zinc fingers lie at residues 200–222 and 228–250; these read YTCHLCRKAFTQCSHLRRHEKTH and YKCHQCGKAFIQSFNLRRHERTH. The C2H2-type 4; degenerate zinc-finger motif lies at 256–278; that stretch reads YECDNSGKAFSQSSGFRGNKIIH.

The protein belongs to the krueppel C2H2-type zinc-finger protein family.

It is found in the nucleus. Its function is as follows. May be involved in transcriptional regulation. This Homo sapiens (Human) protein is Putative zinc finger protein 705EP.